Consider the following 850-residue polypeptide: Response regulator sskA (850 aa).

2 disordered regions span residues 1–225 (MPDR…GASS) and 419–542 (IPQR…GQSP). The segment covering 7-25 (SQLLKSKLLRRSSTTATTS) has biased composition (low complexity). Residues 117–138 (GANSRQEGSQNGSIQQSPTFTR) are compositionally biased toward polar residues. Residues 144 to 163 (QLTEEKDKGKLQSREGDQRG) show a composition bias toward basic and acidic residues. Positions 177–196 (SDPQYSLTTELANKPSTPQT) are enriched in polar residues. Basic and acidic residues predominate over residues 436–445 (HHSEPGEHGE). Over residues 477-490 (PSISILTTDSNMAS) the composition is skewed to polar residues. Over residues 492-511 (PQPPVAAPQVPTPPGPPPES) the composition is skewed to pro residues. Residues 558 to 719 (NVLIVEDNII…WLEQKVTEWG (162 aa)) form the Response regulatory domain. D607 is subject to 4-aspartylphosphate. Residues 736 to 850 (FADEPQSSSP…DEEQQALDAT (115 aa)) form a disordered region. Low complexity predominate over residues 762–782 (SSRTSTSPSSAAVNATARAFA). The span at 819–828 (TLDSPASPLT) shows a compositional bias: polar residues. The segment covering 839 to 850 (PGDEEQQALDAT) has biased composition (acidic residues).

It belongs to the SSK1 family.

The protein resides in the cytoplasm. Final receptor of the osmolarity two-component system regulatory system, which controls activity of the sakA mitogen-activated protein kinase (MAPK) pathway in response to changes in the osmolarity of the extracellular environment. Regulates the germination in the airways that drives enhanced disease initiation and inflammation in the lungs. In Aspergillus fumigatus (strain ATCC MYA-4609 / CBS 101355 / FGSC A1100 / Af293) (Neosartorya fumigata), this protein is Response regulator sskA.